The following is a 1010-amino-acid chain: MIMRSPETSGASMPQSTAHVPDGEQPRASGGSPGAGRLLQHRLELVEDLWQTVLRSECPPEQSERLLRLKQLSDPVALEGRDGESSSEAIVELIRSMDLSEAIAAARAFSLYFQLINILEQRIEEDSYLDSLRPSRSQDDETAAPFDPFAPPLASQTDPATFGEVFERLRRMNVPPAQVETLLRELDIRLVFTAHPTEIVRHTVRHKQRKVASLLQRLQSEPALPRYDEEELRRQLEEEIRLWWRTDELHQFKPTVLDEVDSTLHYFQQVLFEAMPQLRRRLVSSLSRHYPDVQFPQASFCTFGSWVGSDRDGNPSVTPEITWRTACYQRQLMLELYIGSVQSLRNQLSISMQWSQVAPPLLESLEMDRLRFPEIYERRAARYRLEPYRLKLSYILERLELTLQRNHQMSEAGWQSPPEPAATAPTDGIPGHEALHYTAIDQFRSDLELIRNSLVSTELSCEQLDTLLNQVHIFGFSLASLDIRQESTRHSDAIDELTTHLQLPKAYGAMEESERVAWLLEELQTRRPLIPAAVEWSEATAQTFAVFQMLHRLQQEFGQRICHSYVISMSHTASDLLEVMLLAKEIGLVDPQAGKASLLVVPLFETVEDLQRAPAVMDGLFQTPIYRNLLPSVGVQRQPLQELMLGYSDSNKDSGFLSSNWEIHQAQIALQTLASSHGVALRLFHGRGGSVSRGGGPAYQAILAQPSGTLQGRIKITEQGEVLASKYGLPELALYNLETVTTAVVQNSLVTNQLDATPSWNQLMSRVAKRSREHYRALVHDNPDLVAFFQQVTPIEEISKLQISSRPARRKTGARDLSSLRAIPWVFGWTQSRFLLPSWFGVGTALAEEVNDDPEQLDLLRRLHQRWPFFRMLISKVEMTLSKVDLDLAHHYMSSLGNPEQRDAFEGIFKVIADEYGRTLKLVLEITGQSRLLGADQNLQLSVDLRNRTIVPLGFLQVALLRRLRDQNRQPPMSESPGTPEDRRTYSRSELLRGALLTLNGIAAGMRNTG.

Positions 1 to 18 (MIMRSPETSGASMPQSTA) are enriched in polar residues. Disordered stretches follow at residues 1 to 36 (MIMRSPETSGASMPQSTAHVPDGEQPRASGGSPGAG) and 132 to 154 (LRPSRSQDDETAAPFDPFAPPLA). Active-site residues include H195 and K652. Residues 967-986 (QNRQPPMSESPGTPEDRRTY) form a disordered region.

This sequence belongs to the PEPCase type 1 family. Requires Mg(2+) as cofactor.

It carries out the reaction oxaloacetate + phosphate = phosphoenolpyruvate + hydrogencarbonate. In terms of biological role, forms oxaloacetate, a four-carbon dicarboxylic acid source for the tricarboxylic acid cycle. In Parasynechococcus marenigrum (strain WH8102), this protein is Phosphoenolpyruvate carboxylase.